Reading from the N-terminus, the 137-residue chain is Ribonuclease VapC51 (137 aa).

The 116-residue stretch at 5-120 (YLLDTSVIKR…HYDADFDLIA (116 aa)) folds into the PINc domain. The Mg(2+) site is built by Asp-8 and Asp-95.

The protein belongs to the PINc/VapC protein family. The cofactor is Mg(2+).

Toxic component of a type II toxin-antitoxin (TA) system. An RNase. Its cognate antitoxin is VapB51. The protein is Ribonuclease VapC51 of Mycobacterium tuberculosis (strain ATCC 25618 / H37Rv).